Reading from the N-terminus, the 773-residue chain is Transducin-like enhancer protein 4 (773 aa).

3 disordered regions span residues 1-22, 140-162, and 182-360; these read MIRD…QPAQ, HGHG…AIPP, and LPIK…ASSL. The q domain stretch occupies residues 1–136; it reads MIRDLSKMYP…AIIGQQLQAQ (136 aa). Positions 137–204 are GP domain; that stretch reads HLSHGHGLPV…HQRDRDSIKS (68 aa). Over residues 183-202 the composition is skewed to basic and acidic residues; that stretch reads PIKDEKKHHDNDHQRDRDSI. The segment covering 203-212 has biased composition (low complexity); that stretch reads KSSSVSPSAS. Residues 205–274 are ccN domain; that stretch reads SSVSPSASFR…SPRGSPAHSP (70 aa). 3 positions are modified to phosphoserine: Ser208, Ser212, and Ser222. Residues 215–252 show a composition bias toward basic and acidic residues; it reads GAEKHRNSADYSSESKKQKTEEKEIAARYDSDGEKSDD. Residue Lys237 is modified to N6-acetyllysine. Phosphoserine occurs at positions 245, 250, 269, and 273. Over residues 273–289 the composition is skewed to basic and acidic residues; the sequence is SPRENGLDKTRLLKKDA. The interval 275-452 is SP domain; that stretch reads RENGLDKTRL…PGGKPAYSFH (178 aa). N6-acetyllysine is present on Lys281. A compositionally biased stretch (low complexity) spans 290–305; the sequence is PISPASIASSSSTPSS. Ser292 bears the Phosphoserine mark. Residues 317-328 show a composition bias toward polar residues; sequence TTPVSKSNTPTP. Residue Thr318 is modified to Phosphothreonine. 2 positions are modified to phosphoserine: Ser321 and Ser323. Residues Thr325, Thr327, Thr334, and Thr340 each carry the phosphothreonine modification. Residue Ser419 is modified to Phosphoserine. 7 WD repeats span residues 485–523, 531–570, 575–614, 617–656, 658–697, 699–738, and 740–773; these read NHGE…NKSP, NRDN…PRIK, SSAP…LVRQ, GHTD…QLQQ, DFTS…KYQL, LHES…SIFQ, and KESS…EVIY.

It belongs to the WD repeat Groucho/TLE family. As to quaternary structure, homooligomer and heterooligomer with other family members. Interacts with PAX5. Interacts with LEF1, TCF7, TCF7L1 and TCF7L2. Interacts with ZNF703; TLE4 may mediate ZNF703 transcriptional repression. Interacts with SIX3 and SIX6. Interacts with PAX2. Interacts with TLE1. Phosphorylated. PAX5 binding increases phosphorylation. In terms of processing, ubiquitinated by XIAP/BIRC4. In all tissues examined, mostly in brain, and muscle.

It is found in the nucleus. Its function is as follows. Transcriptional corepressor that binds to a number of transcription factors. Inhibits the transcriptional activation mediated by PAX5, and by CTNNB1 and TCF family members in Wnt signaling. The effects of full-length TLE family members may be modulated by association with dominant-negative AES. Essential for the transcriptional repressor activity of SIX3 during retina and lens development and for SIX3 transcriptional auto-repression. Involved in transcriptional repression of GNRHR and enhances MSX1-mediated transcriptional repression of CGA/alpha-GSU. This Homo sapiens (Human) protein is Transducin-like enhancer protein 4 (TLE4).